Consider the following 131-residue polypeptide: Small ribosomal subunit protein uS8 (131 aa).

It belongs to the universal ribosomal protein uS8 family. As to quaternary structure, part of the 30S ribosomal subunit. Contacts proteins S5 and S12.

Functionally, one of the primary rRNA binding proteins, it binds directly to 16S rRNA central domain where it helps coordinate assembly of the platform of the 30S subunit. This is Small ribosomal subunit protein uS8 from Campylobacter hominis (strain ATCC BAA-381 / DSM 21671 / CCUG 45161 / LMG 19568 / NCTC 13146 / CH001A).